Consider the following 275-residue polypeptide: Large ribosomal subunit protein uL2 (275 aa).

Positions 224–275 (AMNPVDHPHGGGEGKAPIGHPGPLTPWGKPALGYKTRKKGKASDKFIVKRRK) are disordered. Residues 264-275 (KASDKFIVKRRK) show a composition bias toward basic and acidic residues.

The protein belongs to the universal ribosomal protein uL2 family. As to quaternary structure, part of the 50S ribosomal subunit. Forms a bridge to the 30S subunit in the 70S ribosome.

In terms of biological role, one of the primary rRNA binding proteins. Required for association of the 30S and 50S subunits to form the 70S ribosome, for tRNA binding and peptide bond formation. It has been suggested to have peptidyltransferase activity; this is somewhat controversial. Makes several contacts with the 16S rRNA in the 70S ribosome. This is Large ribosomal subunit protein uL2 from Caldanaerobacter subterraneus subsp. tengcongensis (strain DSM 15242 / JCM 11007 / NBRC 100824 / MB4) (Thermoanaerobacter tengcongensis).